The following is a 1726-amino-acid chain: MGHTHSRQLFVHMLSVMLKHRGITVSKTKLINFLSFIEEVCPWFPREGTVNLETWKKVGEQIRTHYTLHGPEKVPVETLSFWTLIRDCLDFDNDELKRLGNLLKQEEDPLHTPDSVPSYDPPPPPPPSLKMHPSDNDDSLSSTDEAELDEEAAKYHQEDWGFLAQEKGALTSKDELVECFKNLTIALQNAGIQLPSNNNTFPSAPPFPPAYTPTVMAGLDPPPGFPPPSKHMSPLQKALRQAQRLGEVVSDFSLAFPVFENNNQRYYESLPFKQLKELKIACSQYGPTAPFTIAMIESLGTQALPPNDWKQTARACLSGGDYLLWKSEFFEQCARIADVNRQQGIQTSYEMLIGEGPYQATDTQLNFLPGAYAQISNAARQAWKKLPSSSTKTEDLSKVRQGPDEPYQDFVARLLDTIGKIMSDEKAGMVLAKQLAFENANSACQAALRPYRKKGDLSDFIRICADIGPSYMQGIAMAAALQGKSIKEVLFQQQARNKKGLQKSGNSGCFVCGQPGHRAAVCPQKHQTSVNTPNLCPRCKKGKHWARDCRSKTDVQGNPLPPVSGNLGEGPAPGPETMLWGNTAGSKRTIADLCRATRGSAGLDLCATSYTVLTPEMGVQTLATGVFGPLPPGTVGLLLGRSSASLKGILIHPGVIDSDYTGEIKILASAPNKIIVINAGQRIAQLLLVPLVIQGKTINRDRQDKGFGSSDAYWVQNVTEARPELELRINANFFRGVLDTGADISVISDKYWPTTWPKQMAISTLQGIGQTTNPEQSSSLLTWKDKDGHTGQFKPYILPYLPVNLWGRDILSKMGVYLYSPSPTVTDLMLDQGLLPNQGLGKQHQGIILPLDLKPNQDRKGLGCFPLGTSDSPVTHADPIDWKSEEPVWVDQWPLTQEKLSAAQQLVQEQLRLGHIEPSTSAWNSPIFVIKKKSGKWRLLQDLRKVNETMMHMGALQPGLPTPSAIPDKSYIIVIDLKDCFYTIPLAPQDCKRFAFSLPSVNFKEPMQRYQWRVLPQGMTNSPTLCQKFVATAIAPVRQRFPQLYLVHYMDDILLAHTDEHLLYQAFSILKQHLSLNGLVIADEKIQTHFPYNYLGFSLYPRVYNTQLVKLQTDHLKTLNDFQKLLGDINWIRPYLKLPTYTLQPLFDILKGDSDPASPRTLSLEGRTALQSIEEAIRQQQITYCDYQRSWGLYILPTPRAPTGVLYQDKPLRWIYLSATPTKHLLPYYELVAKIIAKGRHEAIQYFGMEPPFICVPYALEQQDWLFQFSDNWSIAFANYPGQITHHYPSDKLLQFASSHAFIFPKIVRRQPIPEATLIFTDGSSNGTAALIINHQTYYAQTSFSSAQVVELFAVHQALLTVPTSFNLFTDSSYVVGALQMIETVPIIGTTSPEVLNLFTLIQQVLHCRQHPCFFGHIRAHSTLPGALVQGNHTADVLTKQVFFQSAIDAARKSHDLHHQNSHSLRLQFKISREAARQIVKSCSTCPQFFVLPQYGVNPRGLRPNHLWQTDVTHIPQFGRLKYVHVSIDTFSNFLMASLHTGESTRHCIQHLLFCFSTSGIPQTLKTDNGPGYTSRSFQRFCLSFQIHHKTGIPYNPQGQGIVERAHQRIKHQLLKQKKGNELYSPSPHNALNHALYVLNFLTLDTEGNSAAQRFWGERSSCKKPLVRWKDPLTNLWYGPDPVLIWGRGHVCVFPQDAEAPRWIPERLVRAAEELPDASDATHDPE.

G2 carries N-myristoyl glycine; by host lipidation. Residues 103–148 (LKQEEDPLHTPDSVPSYDPPPPPPPSLKMHPSDNDDSLSSTDEAEL) are disordered. A compositionally biased stretch (pro residues) spans 119 to 128 (YDPPPPPPPS). The PTAP/PSAP motif motif lies at 202-205 (PSAP). The short motif at 208 to 211 (PPAY) is the PPXY motif element. A PTAP/PSAP motif motif is present at residues 287–290 (PTAP). The CCHC-type zinc finger occupies 507–524 (SGCFVCGQPGHRAAVCPQ). Residues 550-570 (RSKTDVQGNPLPPVSGNLGEG) are disordered. In terms of domain architecture, Peptidase A2 spans 734-810 (FRGVLDTGAD…LPVNLWGRDI (77 aa)). D739 acts as the Protease; shared with dimeric partner in catalysis. A G-patch domain is found at 821 to 866 (PSPTVTDLMLDQGLLPNQGLGKQHQGIILPLDLKPNQDRKGLGCFP). The Reverse transcriptase domain occupies 911-1099 (LRLGHIEPST…FPYNYLGFSL (189 aa)). 7 residues coordinate Mg(2+): D976, D1051, D1052, D1322, E1351, D1371, and D1436. The RNase H type-1 domain maps to 1313–1444 (IPEATLIFTD…ADVLTKQVFF (132 aa)). The segment at 1446–1487 (SAIDAARKSHDLHHQNSHSLRLQFKISREAARQIVKSCSTCP) adopts an Integrase-type zinc-finger fold. H1455, H1459, C1483, and C1486 together coordinate Zn(2+). In terms of domain architecture, Integrase catalytic spans 1500 to 1659 (RGLRPNHLWQ…SAAQRFWGER (160 aa)). Residues D1511, D1568, and E1604 each contribute to the Mg(2+) site. Positions 1665-1714 (PLVRWKDPLTNLWYGPDPVLIWGRGHVCVFPQDAEAPRWIPERLVRAAEE) form a DNA-binding region, integrase-type.

Belongs to the retroviral Pol polyprotein family. As to quaternary structure, homodimer. Interacts with the G-patch peptide. In terms of assembly, interacts with the reverse transcriptase/ribonuclease H. As to quaternary structure, homotrimer. The cofactor is Mg(2+). Released by autocatalytic processing. The protease can undergo further autoprocessing to yield 2 shorter but enzymatically active forms of 12 kDa and 13 kDa. In terms of processing, myristoylated. Myristoylation of the matrix (MA) domain mediates the transport and binding of Gag polyproteins to the host plasma membrane and is required for the assembly of viral particles. Post-translationally, specific enzymatic cleavages in vivo yield mature proteins.

Its subcellular location is the virion. It catalyses the reaction DNA(n) + a 2'-deoxyribonucleoside 5'-triphosphate = DNA(n+1) + diphosphate. The catalysed reaction is Endonucleolytic cleavage to 5'-phosphomonoester.. The enzyme catalyses dUTP + H2O = dUMP + diphosphate + H(+). Its function is as follows. Matrix protein. Nucleocapsid protein p14: Nucleocapsid protein. Functionally, capsid protein. In terms of biological role, the aspartyl protease mediates proteolytic cleavages of Gag and Gag-Pol polyproteins during or shortly after the release of the virion from the plasma membrane. Cleavages take place as an ordered, step-wise cascade to yield mature proteins. This process is called maturation. Displays maximal activity during the budding process just prior to particle release from the cell. Its function is as follows. Enhances the activity of the reverse transcriptase. May be part of the mature RT. RT is a multifunctional enzyme that converts the viral dimeric RNA genome into dsDNA in the cytoplasm, shortly after virus entry into the cell. This enzyme displays a DNA polymerase activity that can copy either DNA or RNA templates, and a ribonuclease H (RNase H) activity that cleaves the RNA strand of RNA-DNA heteroduplexes in a partially processive 3' to 5' endonucleasic mode. Conversion of viral genomic RNA into dsDNA requires many steps. A tRNA binds to the primer-binding site (PBS) situated at the 5' end of the viral RNA. RT uses the 3' end of the tRNA primer to perfom a short round of RNA-dependent minus-strand DNA synthesis. The reading proceeds through the U5 region and ends after the repeated (R) region which is present at both ends of viral RNA. The portion of the RNA-DNA heteroduplex is digested by the RNase H, resulting in a ssDNA product attached to the tRNA primer. This ssDNA/tRNA hybridizes with the identical R region situated at the 3' end of viral RNA. This template exchange, known as minus-strand DNA strong stop transfer, can be either intra- or intermolecular. RT uses the 3' end of this newly synthesized short ssDNA to perfom the RNA-dependent minus-strand DNA synthesis of the whole template. RNase H digests the RNA template except for a polypurine tract (PPT) situated at the 5' end of the genome. It is not clear if both polymerase and RNase H activities are simultaneous. RNase H probably can proceed both in a polymerase-dependent (RNA cut into small fragments by the same RT performing DNA synthesis) and a polymerase-independent mode (cleavage of remaining RNA fragments by free RTs). Secondly, RT performs DNA-directed plus-strand DNA synthesis using the PPT that has not been removed by RNase H as primers. PPT and tRNA primers are then removed by RNase H. The 3' and 5' ssDNA PBS regions hybridize to form a circular dsDNA intermediate. Strand displacement synthesis by RT to the PBS and PPT ends produces a blunt ended, linear dsDNA copy of the viral genome that includes long terminal repeats (LTRs) at both ends. Functionally, catalyzes viral DNA integration into the host chromosome, by performing a series of DNA cutting and joining reactions. This Ovis aries (Sheep) protein is Gag-Pro-Pol polyprotein (pol).